The sequence spans 331 residues: RDEVVRGRDVVISTHTHDDLGMATANALAGVENGAGQIECTINGIGERAGNCALEEVVMALYVRRDWYKAYTRINTREIYRVSRLVERYTGMPVPPNKAIVGDNAFAHESGIHQDGVIKHRATYEIMDAELIGRRPAVLVLGKHSGRAAFKKALEDLGYKDLSEEEVKKLFARFKEIAEKKGPLSAEELQALVESEREPTSHFFQLEHVQFFSGSGLLPTATVKVKTPDGERLATHTGDGPVDAVYKAIQEAIGLRPELELYRVEAITGSTEALGQVTVRLRLGELQAVGVGVSPDIIEASALAFLDAAGKLASGRATRHPPSIEEVHRGV.

Positions 1 to 80 constitute a Pyruvate carboxyltransferase domain; it reads RDEVVRGRDV…YTRINTREIY (80 aa). The Mn(2+) site is built by His15, His17, and Asn51. The interval 205-331 is regulatory domain; sequence QLEHVQFFSG…PSIEEVHRGV (127 aa).

It belongs to the alpha-IPM synthase/homocitrate synthase family. LeuA type 1 subfamily. In terms of assembly, homotetramer. The cofactor is Mn(2+).

It is found in the cytoplasm. The catalysed reaction is 3-methyl-2-oxobutanoate + acetyl-CoA + H2O = (2S)-2-isopropylmalate + CoA + H(+). Its pathway is amino-acid biosynthesis; L-leucine biosynthesis; L-leucine from 3-methyl-2-oxobutanoate: step 1/4. Its function is as follows. Catalyzes the condensation of the acetyl group of acetyl-CoA with 3-methyl-2-oxobutanoate (2-oxoisovalerate) to form 3-carboxy-3-hydroxy-4-methylpentanoate (2-isopropylmalate). In Thermus thermophilus, this protein is 2-isopropylmalate synthase.